Here is a 342-residue protein sequence, read N- to C-terminus: Anthranilate phosphoribosyltransferase (342 aa).

5-phospho-alpha-D-ribose 1-diphosphate-binding positions include Gly84, 87–88, Thr92, 94–97, 112–120, and Ser124; these read GD, NIST, and KHGNRGVSS. Gly84 provides a ligand contact to anthranilate. Mg(2+) is bound at residue Ser96. Asn115 provides a ligand contact to anthranilate. Arg170 provides a ligand contact to anthranilate. Mg(2+) contacts are provided by Asp229 and Glu230.

Belongs to the anthranilate phosphoribosyltransferase family. As to quaternary structure, homodimer. Requires Mg(2+) as cofactor.

The enzyme catalyses N-(5-phospho-beta-D-ribosyl)anthranilate + diphosphate = 5-phospho-alpha-D-ribose 1-diphosphate + anthranilate. The protein operates within amino-acid biosynthesis; L-tryptophan biosynthesis; L-tryptophan from chorismate: step 2/5. Functionally, catalyzes the transfer of the phosphoribosyl group of 5-phosphorylribose-1-pyrophosphate (PRPP) to anthranilate to yield N-(5'-phosphoribosyl)-anthranilate (PRA). This is Anthranilate phosphoribosyltransferase from Cupriavidus metallidurans (strain ATCC 43123 / DSM 2839 / NBRC 102507 / CH34) (Ralstonia metallidurans).